Reading from the N-terminus, the 356-residue chain is Phosphoserine aminotransferase (356 aa).

R41 lines the L-glutamate pocket. Pyridoxal 5'-phosphate is bound by residues 75-76 (AT), W100, T147, D166, and Q189. K190 carries the post-translational modification N6-(pyridoxal phosphate)lysine. Pyridoxal 5'-phosphate is bound at residue 227–228 (NT).

Belongs to the class-V pyridoxal-phosphate-dependent aminotransferase family. SerC subfamily. As to quaternary structure, homodimer. Pyridoxal 5'-phosphate serves as cofactor.

It localises to the cytoplasm. It carries out the reaction O-phospho-L-serine + 2-oxoglutarate = 3-phosphooxypyruvate + L-glutamate. The enzyme catalyses 4-(phosphooxy)-L-threonine + 2-oxoglutarate = (R)-3-hydroxy-2-oxo-4-phosphooxybutanoate + L-glutamate. The protein operates within amino-acid biosynthesis; L-serine biosynthesis; L-serine from 3-phospho-D-glycerate: step 2/3. In terms of biological role, catalyzes the reversible conversion of 3-phosphohydroxypyruvate to phosphoserine and of 3-hydroxy-2-oxo-4-phosphonooxybutanoate to phosphohydroxythreonine. The protein is Phosphoserine aminotransferase of Exiguobacterium sp. (strain ATCC BAA-1283 / AT1b).